Reading from the N-terminus, the 268-residue chain is Ribosomal RNA small subunit methyltransferase A (268 aa).

6 residues coordinate S-adenosyl-L-methionine: Asn19, Leu21, Gly46, Glu67, Asp92, and Asn113.

Belongs to the class I-like SAM-binding methyltransferase superfamily. rRNA adenine N(6)-methyltransferase family. RsmA subfamily.

Its subcellular location is the cytoplasm. It catalyses the reaction adenosine(1518)/adenosine(1519) in 16S rRNA + 4 S-adenosyl-L-methionine = N(6)-dimethyladenosine(1518)/N(6)-dimethyladenosine(1519) in 16S rRNA + 4 S-adenosyl-L-homocysteine + 4 H(+). Specifically dimethylates two adjacent adenosines (A1518 and A1519) in the loop of a conserved hairpin near the 3'-end of 16S rRNA in the 30S particle. May play a critical role in biogenesis of 30S subunits. The polypeptide is Ribosomal RNA small subunit methyltransferase A (Tolumonas auensis (strain DSM 9187 / NBRC 110442 / TA 4)).